Consider the following 244-residue polypeptide: ATP synthase subunit a, chloroplastic (244 aa).

5 consecutive transmembrane segments (helical) span residues 35–55 (QVLI…AIAV), 92–112 (VPFI…GALL), 131–151 (INTT…AGIT), 196–216 (LVVV…VMFL), and 217–237 (GLFT…AYIG).

The protein belongs to the ATPase A chain family. As to quaternary structure, F-type ATPases have 2 components, CF(1) - the catalytic core - and CF(0) - the membrane proton channel. CF(1) has five subunits: alpha(3), beta(3), gamma(1), delta(1), epsilon(1). CF(0) has four main subunits: a, b, b' and c.

It is found in the plastid. The protein resides in the chloroplast thylakoid membrane. Functionally, key component of the proton channel; it plays a direct role in the translocation of protons across the membrane. The chain is ATP synthase subunit a, chloroplastic from Coffea arabica (Arabian coffee).